A 312-amino-acid polypeptide reads, in one-letter code: MEEECRVLSIQSHVVRGYVGNRAATFPLQVLGFEVDAVNSVQFSNHTGYSHWKGQVLNSDELQELYDGLKLNSVNQYDYVLTGYTRDKSFLAMVVDIVQELKQQNPRLVYVCDPVMGDQRDGEGAMYVPDDLLPVYREKVVPVADIITPNQFEAELLTGRKIHTQEEALEVMDMLHSMGPDTVVITSSDLLSPRGSDYLMALGSQRTRAPDGSMVTQRIRMEMHKVDAVFVGTGDLFAAMLLAWTHKHPNNLKVACEKTVSAMHHVLQRTIKCAKAKSGEGVKPSPAQLELRMVQSKKDIESPEIVVQATVL.

At Met1 the chain carries N-acetylmethionine. Residues Ser12 and Thr47 each coordinate pyridoxal. Thr47 provides a ligand contact to pyridoxal 5'-phosphate. Phosphoserine is present on Ser59. Asp113 is a binding site for ATP. Asp113 lines the Na(+) pocket. Position 118 (Asp118) interacts with Mg(2+). Thr148 lines the Na(+) pocket. ATP-binding positions include 150–153 and 186–187; these read NQFE and TS. Position 186 (Thr186) interacts with Na(+). Position 213 is a phosphoserine (Ser213). ATP is bound by residues 226–228 and Thr233; that span reads VDA. 234–235 is a binding site for pyridoxal 5'-phosphate; the sequence is GD. Asp235 functions as the Proton acceptor in the catalytic mechanism. Position 285 is a phosphoserine (Ser285).

Belongs to the pyridoxine kinase family. Homodimer. Requires Zn(2+) as cofactor. The cofactor is Mg(2+).

The protein resides in the cytoplasm. Its subcellular location is the cytosol. The enzyme catalyses pyridoxal + ATP = pyridoxal 5'-phosphate + ADP + H(+). It catalyses the reaction pyridoxamine + ATP = pyridoxamine 5'-phosphate + ADP + H(+). It carries out the reaction pyridoxine + ATP = pyridoxine 5'-phosphate + ADP + H(+). Its pathway is cofactor metabolism; pyridoxal 5'-phosphate salvage; pyridoxal 5'-phosphate from pyridoxal: step 1/1. The protein operates within cofactor metabolism; pyridoxal 5'-phosphate salvage; pyridoxine 5'-phosphate from pyridoxine: step 1/1. It functions in the pathway cofactor metabolism; pyridoxal 5'-phosphate salvage; pyridoxamine 5'-phosphate from pyridoxamine: step 1/1. Activity is increased in the presence of K(+)or Na(+). In terms of biological role, catalyzes the phosphorylation of the dietary vitamin B6 vitamers pyridoxal (PL), pyridoxine (PN) and pyridoxamine (PM) to form pyridoxal 5'-phosphate (PLP), pyridoxine 5'-phosphate (PNP) and pyridoxamine 5'-phosphate (PMP), respectively. PLP is the active form of vitamin B6, and acts as a cofactor for over 140 different enzymatic reactions. The polypeptide is Pyridoxal kinase (PDXK) (Bos taurus (Bovine)).